Here is a 284-residue protein sequence, read N- to C-terminus: Probable ADP-ribose 1''-phosphate phosphatase YML087W (284 aa).

Substrate contacts are provided by D23, Q55, N80, and D90. The Macro domain maps to 34-230 (ESIPHAYIQN…HISKELKNVL (197 aa)). Residues N80 and D90 contribute to the active site. A disulfide bridge connects residues C128 and C136. Residue H145 is part of the active site. 2 residues coordinate substrate: T148 and T195.

In terms of assembly, homodimer.

The enzyme catalyses ADP-alpha-D-ribose 1''-phosphate + H2O = ADP-D-ribose + phosphate. Highly specific phosphatase involved in the metabolism of ADP-ribose 1''-phosphate (Appr1p) which is produced as a consequence of tRNA splicing. + phosphate. This Saccharomyces cerevisiae (strain ATCC 204508 / S288c) (Baker's yeast) protein is Probable ADP-ribose 1''-phosphate phosphatase YML087W.